Consider the following 590-residue polypeptide: Potassium-transporting ATPase potassium-binding subunit (590 aa).

A run of 12 helical transmembrane segments spans residues 3–23 (AFLLQLAIYLVVLLVLAKPLG), 63–83 (HYALAVIVVNVLGALAVYALQ), 134–154 (GLAVQNFLSAATGIAVVIALI), 177–197 (VYVLLPLSIIVSVFFVSQGVI), 284–304 (FVQMLAIFIIPAALCFTFGGM), 312–332 (WAVLAAMTVLFVVLAVFLAWA), 359–379 (FGIVASSLFATITTAASCGAV), 388–408 (ALGGFVPMFLMQLGEVVFGGV), 411–431 (GLYGMLVYAILAVFIAGLMIG), 451–471 (IAILVTPLLVLVGTAVAVVVT), 515–535 (LALGICMWLGRFWIIVPVLAM), and 558–578 (LFVVLLIGSVLLVGALTYIPA).

The protein belongs to the KdpA family. In terms of assembly, the system is composed of three essential subunits: KdpA, KdpB and KdpC.

It localises to the cell inner membrane. In terms of biological role, part of the high-affinity ATP-driven potassium transport (or Kdp) system, which catalyzes the hydrolysis of ATP coupled with the electrogenic transport of potassium into the cytoplasm. This subunit binds the periplasmic potassium ions and delivers the ions to the membrane domain of KdpB through an intramembrane tunnel. This is Potassium-transporting ATPase potassium-binding subunit from Ralstonia pickettii (strain 12J).